A 372-amino-acid polypeptide reads, in one-letter code: Cyclic GMP-AMP synthase-like receptor (372 aa).

Position 68 (T68) interacts with GTP. Residues S70 and 82–84 each bind ATP; that span reads EFD. Positions 82, 84, and 190 each coordinate Mg(2+). GTP is bound by residues D190 and 236–243; that span reads LVCAPYWE. Residues 240-243, K261, and 274-278 contribute to the ATP site; these read PYWE and SYTIK.

This sequence belongs to the mab-21 family. Mg(2+) serves as cofactor. Mn(2+) is required as a cofactor.

The catalysed reaction is GTP + ATP = 3',2'-cGAMP + 2 diphosphate. It carries out the reaction GTP + ATP = pppA(2'-5')pG + diphosphate. The enzyme catalyses pppA(2'-5')pG = 3',2'-cGAMP + diphosphate. With respect to regulation, the enzyme activity is specifically activated by double-stranded RNA (dsRNA). Nucleotidyltransferase that catalyzes the formation of cyclic GMP-AMP (3',2'-cGAMP) from ATP and GTP and plays a key role in innate immunity. Synthesizes 3',2'-cGAMP in a two-step reaction through production of the linear intermediate pppA(2'-5')pG. Acts as a key sensor of double-stranded RNA (dsRNA), the presence of dsRNA in the cytoplasm being a danger signal that triggers the immune responses. Directly binds dsRNA longer than 15 bp, activating the nucleotidyltransferase activity, leading to synthesis of 3',2'-cGAMP, a second messenger that binds to and activates Sting, thereby triggering the antiviral immune response via activation of the NF-kappa-B transcription factor Rel (Relish). This chain is Cyclic GMP-AMP synthase-like receptor, found in Drosophila eugracilis (Fruit fly).